A 253-amino-acid chain; its full sequence is MRTDINCDMGESFGSYRIGEDEKVMPCITSANVACGWHAGDPMIMARTLELAARHGVAVGAHPGYPDLLGYGRRNLETFPGEVRNYILYQIGALAAFAGAAGVKLQHVKPHGAMYNLAARDERTAKEVIEAVKAYDPGLILVTLAGSLCAQMAADAGLRVAAEVFPDRAYLTTGQLAPRSMPGAVIHDPEQVKERVLKLVRTGMMTSIDGRDLALRADTLCVHGDNPGACLLAASIREALETSGVRVVAMGAQ.

It belongs to the LamB/PxpA family. As to quaternary structure, forms a complex composed of PxpA, PxpB and PxpC.

The catalysed reaction is 5-oxo-L-proline + ATP + 2 H2O = L-glutamate + ADP + phosphate + H(+). Its function is as follows. Catalyzes the cleavage of 5-oxoproline to form L-glutamate coupled to the hydrolysis of ATP to ADP and inorganic phosphate. This chain is 5-oxoprolinase subunit A, found in Syntrophobacter fumaroxidans (strain DSM 10017 / MPOB).